A 286-amino-acid chain; its full sequence is Undecaprenyl-diphosphatase (286 aa).

Helical transmembrane passes span 5-25, 55-75, 92-112, 122-142, 185-205, 229-249, and 264-284; these read WFII…FLPV, IDAF…VLYW, SGFK…VLGL, LFNP…MIFA, IIGA…SFFL, MHIV…LIVV, and FAMY…FNVI.

This sequence belongs to the UppP family.

Its subcellular location is the cell membrane. It catalyses the reaction di-trans,octa-cis-undecaprenyl diphosphate + H2O = di-trans,octa-cis-undecaprenyl phosphate + phosphate + H(+). In terms of biological role, catalyzes the dephosphorylation of undecaprenyl diphosphate (UPP). Confers resistance to bacitracin. The polypeptide is Undecaprenyl-diphosphatase (Clostridium novyi (strain NT)).